The sequence spans 278 residues: MINSKTKLVGLIGHPVDHSFSPIMHNAAIKDLKINYRYFAFDVSEENLKDVVAGAKAFNFRGFNITIPHKMNIMKYLDEIDCDAEAIGAVNTVKIENGKAIGYNTDGIGVKKALEEKTGILINKNILIIGSGGASRAVSFELAKDNNLTIVNRNIEKAENLSKEISRKLKKENPLNYGGLDINIENFDIIINTTPVGMYPHTEVEPVIPLNNIKKDAVVMDLIYNPLEPVFLKEAKKYGAKTINGIGMLVYQGAVSFEIWTGIKPDIFVMKKSIISKI.

Shikimate is bound by residues 19–21 (SFS) and threonine 66. The active-site Proton acceptor is the lysine 70. Positions 91 and 106 each coordinate shikimate. NADP(+) contacts are provided by residues 130–134 (GSGGA) and leucine 222. Residue tyrosine 224 participates in shikimate binding. Glycine 245 contacts NADP(+).

This sequence belongs to the shikimate dehydrogenase family. As to quaternary structure, homodimer.

The catalysed reaction is shikimate + NADP(+) = 3-dehydroshikimate + NADPH + H(+). It functions in the pathway metabolic intermediate biosynthesis; chorismate biosynthesis; chorismate from D-erythrose 4-phosphate and phosphoenolpyruvate: step 4/7. In terms of biological role, involved in the biosynthesis of the chorismate, which leads to the biosynthesis of aromatic amino acids. Catalyzes the reversible NADPH linked reduction of 3-dehydroshikimate (DHSA) to yield shikimate (SA). The protein is Shikimate dehydrogenase (NADP(+)) of Methanococcus maripaludis (strain DSM 14266 / JCM 13030 / NBRC 101832 / S2 / LL).